The following is a 116-amino-acid chain: uncharacterized protein (116 aa).

This is an uncharacterized protein from Invertebrate iridescent virus 6 (IIV-6).